The following is a 222-amino-acid chain: Probable fimbrial chaperone EcpB (222 aa).

Residues 1 to 20 form the signal peptide; that stretch reads MKKHLLPLALLFSGISPAQA.

Belongs to the EcpB/EcpE family.

Functionally, part of the ecpRABCDE operon, which encodes the E.coli common pilus (ECP). ECP is found in both commensal and pathogenic strains and plays a dual role in early-stage biofilm development and host cell recognition. This Escherichia coli (strain K12) protein is Probable fimbrial chaperone EcpB (ecpB).